Consider the following 216-residue polypeptide: MTTPSSFNPQAFIELALSRGVLKFGEFTLKSGRVSPYFFNAGLLNDGEALSLLAQGYADQLMQCQHVDVIFGPAYKGIPFVAATAVALSQLHAKSVPWGFNRKEAKDHGEGGVLVGASVEGKKVWIIDDVITAGTAIREVVTILKNAGATIAGVLVALDRQERGQGQLSAIQEVQQELEIPVHALITMKDLMNYLDAKGETQALAKMEDYRLKYGI.

Lysine 30 contributes to the 5-phospho-alpha-D-ribose 1-diphosphate binding site. Residue 38–39 (FF) coordinates orotate. 5-phospho-alpha-D-ribose 1-diphosphate contacts are provided by residues 75 to 76 (YK), arginine 102, lysine 103, lysine 106, histidine 108, and 128 to 136 (DDVITAGTA). Orotate is bound by residues threonine 132 and arginine 160.

This sequence belongs to the purine/pyrimidine phosphoribosyltransferase family. PyrE subfamily. As to quaternary structure, homodimer. Mg(2+) is required as a cofactor.

The catalysed reaction is orotidine 5'-phosphate + diphosphate = orotate + 5-phospho-alpha-D-ribose 1-diphosphate. The protein operates within pyrimidine metabolism; UMP biosynthesis via de novo pathway; UMP from orotate: step 1/2. Catalyzes the transfer of a ribosyl phosphate group from 5-phosphoribose 1-diphosphate to orotate, leading to the formation of orotidine monophosphate (OMP). This is Orotate phosphoribosyltransferase from Acinetobacter baylyi (strain ATCC 33305 / BD413 / ADP1).